Here is a 230-residue protein sequence, read N- to C-terminus: uncharacterized protein (230 aa).

Positions 1–18 (MRQYTSKSILFMTAIALS) are cleaved as a signal peptide.

This is an uncharacterized protein from Pasteurella multocida (strain Pm70).